A 20-amino-acid chain; its full sequence is Sperm acrosome membrane-associated protein 3, processed form (20 aa).

It belongs to the glycosyl hydrolase 22 family.

Functionally, sperm surface membrane protein that may be involved in sperm-egg plasma membrane adhesion and fusion during fertilization. It could be a potential receptor for the egg oligosaccharide residue N-acetylglucosamine, which is present in the extracellular matrix over the egg plasma membrane. This is Sperm acrosome membrane-associated protein 3, processed form (SPACA3) from Vulpes vulpes (Red fox).